The following is a 237-amino-acid chain: Ribosomal RNA small subunit methyltransferase G (237 aa).

S-adenosyl-L-methionine contacts are provided by residues glycine 78, phenylalanine 83, 129–130 (AE), and arginine 148.

This sequence belongs to the methyltransferase superfamily. RNA methyltransferase RsmG family.

The protein resides in the cytoplasm. Functionally, specifically methylates the N7 position of a guanine in 16S rRNA. The polypeptide is Ribosomal RNA small subunit methyltransferase G (Streptococcus pyogenes serotype M18 (strain MGAS8232)).